The primary structure comprises 140 residues: Blasticidin-S deaminase (140 aa).

The 133-residue stretch at Gln8–Asn140 folds into the CMP/dCMP-type deaminase domain. Position 59 (Cys59) interacts with Zn(2+). Catalysis depends on Glu61, which acts as the Proton donor. Zn(2+) is bound by residues Cys100 and Cys103.

Belongs to the cytidine and deoxycytidylate deaminase family. Zn(2+) is required as a cofactor.

The catalysed reaction is blasticidin S + H2O + H(+) = deaminohydroxyblasticidin S + NH4(+). Functionally, catalyzes the deamination of the cytosine moiety of the antibiotics blasticidin S, cytomycin and acetylblasticidin S. The protein is Blasticidin-S deaminase (bsr) of Bacillus cereus.